Reading from the N-terminus, the 348-residue chain is Holliday junction branch migration complex subunit RuvB (348 aa).

Residues A4–Y184 are large ATPase domain (RuvB-L). ATP is bound by residues I23, R24, G65, K68, T69, T70, E131–F133, R174, Y184, and R221. T69 contacts Mg(2+). A small ATPAse domain (RuvB-S) region spans residues S185 to D255. Positions E258–E348 are head domain (RuvB-H). R294, R313, and R318 together coordinate DNA.

The protein belongs to the RuvB family. Homohexamer. Forms an RuvA(8)-RuvB(12)-Holliday junction (HJ) complex. HJ DNA is sandwiched between 2 RuvA tetramers; dsDNA enters through RuvA and exits via RuvB. An RuvB hexamer assembles on each DNA strand where it exits the tetramer. Each RuvB hexamer is contacted by two RuvA subunits (via domain III) on 2 adjacent RuvB subunits; this complex drives branch migration. In the full resolvosome a probable DNA-RuvA(4)-RuvB(12)-RuvC(2) complex forms which resolves the HJ.

The protein resides in the cytoplasm. The catalysed reaction is ATP + H2O = ADP + phosphate + H(+). Functionally, the RuvA-RuvB-RuvC complex processes Holliday junction (HJ) DNA during genetic recombination and DNA repair, while the RuvA-RuvB complex plays an important role in the rescue of blocked DNA replication forks via replication fork reversal (RFR). RuvA specifically binds to HJ cruciform DNA, conferring on it an open structure. The RuvB hexamer acts as an ATP-dependent pump, pulling dsDNA into and through the RuvAB complex. RuvB forms 2 homohexamers on either side of HJ DNA bound by 1 or 2 RuvA tetramers; 4 subunits per hexamer contact DNA at a time. Coordinated motions by a converter formed by DNA-disengaged RuvB subunits stimulates ATP hydrolysis and nucleotide exchange. Immobilization of the converter enables RuvB to convert the ATP-contained energy into a lever motion, pulling 2 nucleotides of DNA out of the RuvA tetramer per ATP hydrolyzed, thus driving DNA branch migration. The RuvB motors rotate together with the DNA substrate, which together with the progressing nucleotide cycle form the mechanistic basis for DNA recombination by continuous HJ branch migration. Branch migration allows RuvC to scan DNA until it finds its consensus sequence, where it cleaves and resolves cruciform DNA. The polypeptide is Holliday junction branch migration complex subunit RuvB (Pseudomonas putida (strain W619)).